We begin with the raw amino-acid sequence, 637 residues long: Serine protease Hayan (637 aa).

The signal sequence occupies residues 1–26 (MAMISARRYFLLGLLVLTTSAYVTVG). The Clip domain occupies 31–79 (PCQVRSDIPGICLSSSACENIRGYLKSGTLSTSQVPSCGFGAREEIICC). Cystine bridges form between cysteine 32/cysteine 78, cysteine 42/cysteine 68, and cysteine 48/cysteine 79. Disordered stretches follow at residues 95-137 (FHAT…LDEN), 152-178 (KPQK…SMKM), 216-260 (QRSF…NNNN), and 286-365 (LQTT…EKER). Over residues 125–136 (EGKRERESRLDE) the composition is skewed to basic and acidic residues. The span at 234 to 244 (PLTTPRSRPQR) shows a compositional bias: polar residues. Low complexity predominate over residues 245-260 (PNNSNFNTNPSPNNNN). Residues 306-320 (EPYRFRGQDRDKDTQ) are compositionally biased toward basic and acidic residues. Positions 321-332 (PQEPWNDVSNNL) are enriched in polar residues. 4 disulfide bridges follow: cysteine 371/cysteine 497, cysteine 414/cysteine 430, cysteine 543/cysteine 567, and cysteine 578/cysteine 609. Residues 385-632 (ILDGERVDRG…FLDYIEGIVW (248 aa)) enclose the Peptidase S1 domain. Active-site charge relay system residues include histidine 429 and aspartate 477. Serine 582 functions as the Charge relay system in the catalytic mechanism.

Belongs to the peptidase S1 family. CLIP subfamily.

It localises to the secreted. In terms of biological role, serine protease which, by converting prophenoloxidase 1 (PPO1) into its active form, plays an essential role in the melanization immune response to physical or septic wounding. May function in diverse PPO1-activating cascades that are negatively controlled by different serpin proteins; Spn27A and Spn28D in the hemolymph, and Spn28D and Spn77BA in the trachea. Also required in the systematic wound response by mediating the redox-dependent activation of the JNK cytoprotective cascade in neuronal tissues after integument wounding. The chain is Serine protease Hayan from Drosophila melanogaster (Fruit fly).